The primary structure comprises 245 residues: 1-(5-phosphoribosyl)-5-[(5-phosphoribosylamino)methylideneamino] imidazole-4-carboxamide isomerase (245 aa).

Residue D7 is the Proton acceptor of the active site. Residue D129 is the Proton donor of the active site.

Belongs to the HisA/HisF family.

It is found in the cytoplasm. The enzyme catalyses 1-(5-phospho-beta-D-ribosyl)-5-[(5-phospho-beta-D-ribosylamino)methylideneamino]imidazole-4-carboxamide = 5-[(5-phospho-1-deoxy-D-ribulos-1-ylimino)methylamino]-1-(5-phospho-beta-D-ribosyl)imidazole-4-carboxamide. It participates in amino-acid biosynthesis; L-histidine biosynthesis; L-histidine from 5-phospho-alpha-D-ribose 1-diphosphate: step 4/9. In Escherichia coli O9:H4 (strain HS), this protein is 1-(5-phosphoribosyl)-5-[(5-phosphoribosylamino)methylideneamino] imidazole-4-carboxamide isomerase.